A 246-amino-acid polypeptide reads, in one-letter code: Heavy metal-associated isoprenylated plant protein 8 (246 aa).

The interval 1–31 (MGKNKQNGESDNKSEKKNQKNGDSSVDKSDK) is disordered. One can recognise an HMA 1 domain in the interval 35 to 99 (CKEIVLKVYM…RVQKKFSRNA (65 aa)). A metal cation contacts are provided by Cys46 and Cys49. Residues 96-122 (SRNAEMISPKHNPKQDQKEPQQKKESA) are disordered. Residues 108 to 122 (PKQDQKEPQQKKESA) show a composition bias toward basic and acidic residues. The region spanning 125–189 (IKTAILRMNM…IKKKLGKHAE (65 aa)) is the HMA 2 domain. Residues Cys136 and Cys139 each coordinate a metal cation. Residues 191 to 226 (LSQITEKGKDNNKKNNNKKEESDGNKIFSYPPQYSS) are disordered. The span at 196–214 (EKGKDNNKKNNNKKEESDG) shows a compositional bias: basic and acidic residues. Cys243 is modified (cysteine methyl ester). The S-farnesyl cysteine moiety is linked to residue Cys243. A propeptide spans 244 to 246 (SIM) (removed in mature form).

It belongs to the HIPP family.

Its function is as follows. Heavy-metal-binding protein. This is Heavy metal-associated isoprenylated plant protein 8 from Arabidopsis thaliana (Mouse-ear cress).